Consider the following 506-residue polypeptide: Chromosomal replication initiator protein DnaA (506 aa).

The interval 1 to 87 is domain I, interacts with DnaA modulators; it reads MSVELWQQCV…IGSRRSSAPR (87 aa). The segment at 87-169 is domain II; sequence RAAPNAPVSA…QVEGALKHTS (83 aa). Positions 135–154 are disordered; the sequence is DSFDAMAEPAAAPPSGGGRA. The span at 139–148 shows a compositional bias: low complexity; it reads AMAEPAAAPP. Residues 170–386 form a domain III, AAA+ region region; sequence YLNRTFTFDT…GALKRVIAHS (217 aa). ATP-binding residues include Gly-214, Gly-216, Lys-217, and Thr-218. A domain IV, binds dsDNA region spans residues 387 to 506; that stretch reads HFMGRDITIE…YKNLLRTLTT (120 aa).

This sequence belongs to the DnaA family. As to quaternary structure, oligomerizes as a right-handed, spiral filament on DNA at oriC.

Its subcellular location is the cytoplasm. Its function is as follows. Plays an essential role in the initiation and regulation of chromosomal replication. ATP-DnaA binds to the origin of replication (oriC) to initiate formation of the DNA replication initiation complex once per cell cycle. Binds the DnaA box (a 9 base pair repeat at the origin) and separates the double-stranded (ds)DNA. Forms a right-handed helical filament on oriC DNA; dsDNA binds to the exterior of the filament while single-stranded (ss)DNA is stabiized in the filament's interior. The ATP-DnaA-oriC complex binds and stabilizes one strand of the AT-rich DNA unwinding element (DUE), permitting loading of DNA polymerase. After initiation quickly degrades to an ADP-DnaA complex that is not apt for DNA replication. Binds acidic phospholipids. In terms of biological role, non-cooperatively binds DnaA boxes in the minimal plasmid RK2 replication origin (oriV). In vitro in the presence of plasmid RK2-derived TrfA and E.coli protein HU, forms an open complex at oriV. This complex was not however competent for formation of a pre-priming complex with E.coli DnaB and DnaC. Broad host range plasmid RK2 requires not only DnaA for replication but also TrfA and host factors. The chain is Chromosomal replication initiator protein DnaA from Pseudomonas putida (strain ATCC 47054 / DSM 6125 / CFBP 8728 / NCIMB 11950 / KT2440).